We begin with the raw amino-acid sequence, 186 residues long: ADP-ribosylation factor-like protein 6 (186 aa).

Gly2 carries the N-myristoyl glycine lipid modification. GTP contacts are provided by residues Gly24–Thr31, Thr50, Asp69–Gln73, Gly72, Asn130–Asp133, and Ala164. Residue Thr50 coordinates Mg(2+).

It belongs to the small GTPase superfamily. Arf family. Interacts with SEC61B, ARL6IP1, ARL6IP2, ARL6IP3, ARL6IP4 ARL6IP5 and ARL6IP6. Interacts (GTP-bound form) with the BBSome a complex that contains BBS1, BBS2, BBS4, BBS5, BBS7, BBS8/TTC8, BBS9 and BBIP10. Interacts (GTP-free form) with IFT27.

The protein resides in the cell projection. It is found in the cilium membrane. Its subcellular location is the cytoplasm. It localises to the cytoskeleton. The protein localises to the cilium axoneme. The protein resides in the cilium basal body. Functionally, involved in membrane protein trafficking at the base of the ciliary organelle. Mediates recruitment onto plasma membrane of the BBSome complex which would constitute a coat complex required for sorting of specific membrane proteins to the primary cilia. Together with the BBSome complex and LTZL1, controls SMO ciliary trafficking and contributes to the sonic hedgehog (SHH) pathway regulation. May regulate cilia assembly and disassembly and subsequent ciliary signaling events such as the Wnt signaling cascade. Isoform 2 may be required for proper retinal function and organization. The polypeptide is ADP-ribosylation factor-like protein 6 (ARL6) (Pongo abelii (Sumatran orangutan)).